The primary structure comprises 469 residues: MNLGKIVQVIGNVVDVEFGEGKLPPLLTALFVSNPGLNDQEDNLVLEVAQHLGDNVVRTIGMDLTDGLVRGMPVKDTGNPIMMPVGAAVLGRVINVVGRTVDGLGPVNTDTYMPIHRTAPAFTEQDTSVKVLETGVKVIDLLVPFPRGGKMGMFGGAGVGKTVVMMEMIHNIAMQHGGISVFAGVGERTREGNDLYHEMKDSGVLPRAGLVYGQMTEPPGARARVALSALTVAEYFRDVEGQDVLLFVDNIFRFTQAGAEVSALLGRMPSAVGYQPTLGTDLGELQERITSTTKGSITSVQCVYVPADDLTDPAPATTFAHLDGTVVLSRQIAELGIYPAVDPLDSTSRILDPNVLGEDHYYTAREVQQILQKYKDLQDIIAILGMDELSDEDKLTVARARKIQRFLSQPFHVAETFTGVAGKYVKVEDTVRGFKEICEGKHDDIPEQAFFMAGGIEEVLEKAKQMSAA.

155–162 (GGAGVGKT) contacts ATP.

This sequence belongs to the ATPase alpha/beta chains family. As to quaternary structure, F-type ATPases have 2 components, CF(1) - the catalytic core - and CF(0) - the membrane proton channel. CF(1) has five subunits: alpha(3), beta(3), gamma(1), delta(1), epsilon(1). CF(0) has three main subunits: a(1), b(2) and c(9-12). The alpha and beta chains form an alternating ring which encloses part of the gamma chain. CF(1) is attached to CF(0) by a central stalk formed by the gamma and epsilon chains, while a peripheral stalk is formed by the delta and b chains.

It localises to the cell inner membrane. It catalyses the reaction ATP + H2O + 4 H(+)(in) = ADP + phosphate + 5 H(+)(out). In terms of biological role, produces ATP from ADP in the presence of a proton gradient across the membrane. The catalytic sites are hosted primarily by the beta subunits. In Syntrophobacter fumaroxidans (strain DSM 10017 / MPOB), this protein is ATP synthase subunit beta.